A 512-amino-acid polypeptide reads, in one-letter code: Protein arginine N-methyltransferase 2 (512 aa).

The interval 67-103 (TSNIDDLPLPPPIQEVEEEEPTQQNIEQQQQTQDESD) is disordered. Positions 88–99 (TQQNIEQQQQTQ) are enriched in low complexity. Residues 120–508 (DEEYFSSYSK…KTNPFDYSYQ (389 aa)) form the SAM-dependent MTase PRMT-type domain. H133, R142, G166, and E217 together coordinate S-adenosyl-L-methionine. Catalysis depends on residues E231 and E240. The disordered stretch occupies residues 375-395 (DDDDNDNNNNNNDNSNDDENK).

Belongs to the class I-like SAM-binding methyltransferase superfamily. Protein arginine N-methyltransferase family.

Its subcellular location is the cytoplasm. It is found in the nucleus. The enzyme catalyses L-arginyl-[protein] + 2 S-adenosyl-L-methionine = N(omega),N(omega)-dimethyl-L-arginyl-[protein] + 2 S-adenosyl-L-homocysteine + 2 H(+). In terms of biological role, arginine methyltransferase that methylates the guanidino nitrogens of arginyl residues in some proteins such as histones. The sequence is that of Protein arginine N-methyltransferase 2 (prmt2) from Dictyostelium discoideum (Social amoeba).